Reading from the N-terminus, the 970-residue chain is Pentatricopeptide repeat-containing protein At1g18485 (970 aa).

19 PPR repeats span residues 119-149 (DDVL…LRSK), 150-185 (NLFQ…DLLP), 186-220 (DHFT…GLVE), 221-251 (DVFV…MPER), 252-282 (NLVS…MMEE), 291-325 (DVAT…RLDK), 326-356 (ELVL…NNNK), 357-391 (NVVS…GEDV), 394-428 (DEVT…EFVY), 429-459 (NELV…IRSK), 460-494 (TVNS…GLLP), 495-529 (DSFT…WLER), 530-560 (DLFV…MEDK), 561-595 (SLVS…GIQL), 597-630 (GISM…LLED), 631-661 (DAFI…LKEK), 662-696 (STAS…GHNP), 697-727 (DDLT…MKSS), and 733-764 (NLKH…MSEE). Positions 770 to 845 (WKSLLSSCRI…AGCSWIELNR (76 aa)) are type E motif. Residues 846–875 (KVFSFVVGERFLDGFEEIKSLWSILEMKIS) are type E(+) motif. Residues 876–970 (KMGYRPDTMS…NGVCSCGDYW (95 aa)) are type DYW motif.

The protein belongs to the PPR family. PCMP-H subfamily.

This chain is Pentatricopeptide repeat-containing protein At1g18485 (PCMP-H8), found in Arabidopsis thaliana (Mouse-ear cress).